A 469-amino-acid polypeptide reads, in one-letter code: Regulator of G-protein signaling 7 (469 aa).

Residues 37-112 form the DEP domain; sequence EKNGIPIRTV…DDGTFYRFQT (76 aa). S229 and S241 each carry phosphoserine. The tract at residues 235-256 is disordered; the sequence is NDIRSHSPTHTPTPETKPPTED. The residue at position 243 (T243) is a Phosphothreonine. Residues 255–316 enclose the G protein gamma domain; the sequence is EDELQQQIKY…LSDDTTFWEL (62 aa). An RGS domain is found at 333-448; it reads GMDEALKDPV…IRSSAYQELL (116 aa). S434 carries the post-translational modification Phosphoserine.

In terms of assembly, interacts with GNB5, forming the RGS7-GNB5 complex. Interacts with GPR158; promotes the GTPase activator activity of the RGS7-GNB5 complex in absence of glycine, in contrast GTPase activator activity of the RGS7-GNB5 complex is inhibited in presence of glycine. Interacts with GPR179. Interacts with PKD1; this prevents rapid proteasomal degradation. Interacts with RGS7BP, leading to regulate the subcellular location of the heterodimer formed with GNB5. Interacts (phosphorylated form) with 14-3-3 protein YWHAQ. Interacts with SNAPIN. Interacts with GNAI1. Interacts with GNAO1, GNAI3 and GNAZ. Post-translationally, palmitoylated. Ubiquitinated, leading to rapid proteasomal degradation. In terms of processing, phosphorylation and subsequent interaction with 14-3-3 proteins inhibits GAP activity. Detected in retina (at protein level).

It is found in the cytoplasm. The protein resides in the cytosol. The protein localises to the cell membrane. It localises to the membrane. Its function is as follows. GTPase activator component of the RGS7-GNB5 complex that regulates G protein-coupled receptor signaling cascades. The RGS7-GNB5 complex acts as an inhibitor signal transduction by promoting the GTPase activity of G protein alpha subunits, such as GNAO1, thereby driving them into their inactive GDP-bound form. May play a role in synaptic vesicle exocytosis. Glycine-dependent regulation of the RGS7-GNB5 complex by GPR158 affects mood and cognition via its ability to regulate neuronal excitability in L2/L3 pyramidal neurons of the prefrontal cortex. Modulates the activity of potassium channels that are activated by GNAO1 in response to muscarinic acetylcholine receptor M2/CHRM2 signaling. This chain is Regulator of G-protein signaling 7 (RGS7), found in Bos taurus (Bovine).